Reading from the N-terminus, the 963-residue chain is MVGCGVAVLCLWVSCGAAAGQLEYSVPEETERGVAVGNLSADLRLPAAAMSSRNFRFLSSHRELYFGVDLPSGNLVVREPADREQLCRAKAACVLTYDLVLEDPLELHKIRIHVLDTNDNSPLFPAGDVQLHIPEFLTPGARFTLPNAQDDDEGSNGILSYSLSPSQHFRLDMGSRVDGSEYPELVLEKALDREQRATHLLVLTARDGGLPARSGDAQVTIIVVDTNDNAPVFERSVYRTKVPETAPNGTVLFRVQALDPDEGSNGEVQYSLSNSTQAELRHRFHVHPKSGEVQVAASLGPPETLLEAYIEARDEGVFGLASTAKLLVEVTDVNDHAPELDFLTLSNPVPEDAAPGTVIALFSVKDEDLDSNGRVICGMSSAGPFQLTASFDNYYSLLIDGPLDREQISEYQVLITASDSGSPPLSTRRTITVSVADVNDNTPNFPQPQQELFVAENNGPGASLGRVFAQDPDLGKNGLVSYELLDVISEGPSASSLLAVESSSGAITAKTSFDFEQLRGFHFQVEGRDGGIPPRSATVTINLFVVDRNDNYPVILFPLPRNGSVPVEIVPRSARTGHLVTKVVAEDADSGSNAWLSYHISRASDSSLFRISANIGELRTARLVLPTDAVKQRVVVVVRDHGDPPLSSSVTLGVLLSNSVPQLLPDFEDVWEPGGQLSAQNLYLVIALACISFLFLGCLLFFVCTKLHQSPGCCAQSCCRSTEDLRYGSKMVSNPCMTSATIDVTTVERLSQTYLYRASLGLGSDNNSLLLRGEYNAADLRNLATGVGLNLPISCIQIRNRKGDHANVNAMPRQPNPDWRYSASLRAGMHSSVHLEEAGILRAGPGGPDQQWPTVSSATPEPEAGEVSPPVGAGVNSNSWTFKYGPGNPKQSGPGELPDKFIIPGSPAIISIRQEPTNSQIDKSDFITFGKKEETKKKKKKKKGNKTQEKKEKGNSTTDNSDQ.

A signal peptide spans 1–18; the sequence is MVGCGVAVLCLWVSCGAA. Cadherin domains are found at residues 19–124, 125–233, 234–340, 349–445, and 446–555; these read AGQL…SPLF, PAGD…APVF, ERSV…APEL, VPED…TPNF, and PQPQ…YPVI. Residues 19 to 683 lie on the Extracellular side of the membrane; the sequence is AGQLEYSVPE…GGQLSAQNLY (665 aa). An N-linked (GlcNAc...) asparagine glycan is attached at Asn-38. 2 N-linked (GlcNAc...) asparagine glycosylation sites follow: Asn-248 and Asn-274. Asn-562 carries N-linked (GlcNAc...) asparagine glycosylation. The Cadherin 6 domain occupies 570–667; the sequence is VPRSARTGHL…NSVPQLLPDF (98 aa). Residues 684-704 traverse the membrane as a helical segment; sequence LVIALACISFLFLGCLLFFVC. The Cytoplasmic segment spans residues 705–963; it reads TKLHQSPGCC…GNSTTDNSDQ (259 aa). 4 PXXP repeats span residues 812–815, 845–848, 886–889, and 904–907; these read PRQP, PGGP, PGNP, and PGSP. Positions 812–907 are 4 X 4 AA repeats of P-X-X-P; sequence PRQPNPDWRY…PDKFIIPGSP (96 aa). The tract at residues 844 to 963 is disordered; it reads GPGGPDQQWP…GNSTTDNSDQ (120 aa). Positions 922-936 are enriched in basic and acidic residues; that stretch reads DKSDFITFGKKEETK.

It localises to the cell membrane. In terms of biological role, potential calcium-dependent cell-adhesion protein. May be involved in the establishment and maintenance of specific neuronal connections in the brain. The sequence is that of Protocadherin alpha-C1 (PCDHAC1) from Homo sapiens (Human).